The primary structure comprises 385 residues: MEWNGLKMIISTMEPQVSNGPTSNTSNGPSSNNRNCPSPMQTGATTDDSKTNLIVNYLPQNMTQEEFRSLFGSIGEIESCKLVRDKITGQSLGYGFVNYIDPKDAEKAINTLNGLRLQTKTIKVSYARPSSASIRDANLYVSGLPKTMTQKELEQLFSQYGRIITSRILVDQVTGVSRGVGFIRFDKRIEAEEAIKGLNGQKPSGATEPITVKFANNPSQKSSQALLSQLYQSPNRRYPGPLHHQAQRFRLDNLLNMAYGVKRLMSGPVPPSACPPRFSPITIDGMTSLVGMNIPGHTGTGWCIFVYNLSPDSDESVLWQLFGPFGAVNNVKVIRDFNTNKCKGFGFVTMTNYDEAAMAIASLNGYRLGDRVLQVSFKTNKAHKS.

Residues 12–48 (TMEPQVSNGPTSNTSNGPSSNNRNCPSPMQTGATTDD) form a disordered region. Over residues 18-33 (SNGPTSNTSNGPSSNN) the composition is skewed to low complexity. The segment covering 34-48 (RNCPSPMQTGATTDD) has biased composition (polar residues). Position 38 is a phosphoserine (Ser38). 2 RRM domains span residues 51–129 (TNLI…YARP) and 137–217 (ANLY…FANN). Ser233 bears the Phosphoserine mark. Position 248 is an asymmetric dimethylarginine; by CARM1; alternate (Arg248). At Arg248 the chain carries Omega-N-methylarginine; by CARM1; alternate. Residues 302–380 (WCIFVYNLSP…RVLQVSFKTN (79 aa)) form the RRM 3 domain.

Belongs to the RRM elav family. In terms of assembly, component of a TAU mRNP complex, at least composed of IGF2BP1, ELAVL4 and G3BP. Associates with the EIF4F cap-binding complex, composed of EIF4G, EIF4A, EIF4E and PABP. Within the EIF4F cap-binding complex, interacts with EIF4A. Interacts with SMN (via Tudor domain) in an RNA-independent manner; the interaction is required for localization of ELAVL4 to RNA granules. Interacts with MAP1 light chain LC1 (via C-terminus); the interaction contributes to the association of ELAVL4 with microtubules. Interacts with MAP1 light chain LC2. Post-translationally, methylated by CARM1, which leads to reduced RNA-binding activity and enhanced interaction with SMN. Methylation at Arg-248 by CARM1 weakens protective binding to the 3'UTR of CDKN1A mRNA and down-regulates CDKN1A protein expression, thereby maintaining cells in a proliferative state. Methylation is inhibited by NGF, which facilitates neurite outgrowth. Expressed in pancreatic beta cells (at protein level). Expressed in the brain.

It is found in the cytoplasm. Its subcellular location is the perikaryon. It localises to the cell projection. The protein localises to the dendrite. The protein resides in the axon. It is found in the growth cone. In terms of biological role, RNA-binding protein that is involved in the post-transcriptional regulation of mRNAs. Plays a role in the regulation of mRNA stability, alternative splicing and translation. Binds to AU-rich element (ARE) sequences in the 3' untranslated region (UTR) of target mRNAs, including GAP43, VEGF, FOS, CDKN1A and ACHE mRNA. Many of the target mRNAs are coding for RNA-binding proteins, transcription factors and proteins involved in RNA processing and/or neuronal development and function. By binding to the mRNA 3'UTR, decreases mRNA deadenylation and thereby contributes to the stabilization of mRNA molecules and their protection from decay. Also binds to the polyadenylated (poly(A)) tail in the 3'UTR of mRNA, thereby increasing its affinity for mRNA binding. Mainly plays a role in neuron-specific RNA processing by stabilization of mRNAs such as GAP43, ACHE and mRNAs of other neuronal proteins, thereby contributing to the differentiation of neural progenitor cells, nervous system development, learning and memory mechanisms. Involved in the negative regulation of the proliferative activity of neuronal stem cells and in the positive regulation of neuronal differentiation of neural progenitor cells. Promotes neuronal differentiation of neural stem/progenitor cells in the adult subventricular zone of the hippocampus by binding to and stabilizing SATB1 mRNA. Binds and stabilizes MSI1 mRNA in neural stem cells. Exhibits increased binding to ACHE mRNA during neuronal differentiation, thereby stabilizing ACHE mRNA and enhancing its expression. Protects CDKN1A mRNA from decay by binding to its 3'-UTR. May bind to APP and BACE1 mRNAS and the BACE1AS lncRNA and enhance their stabilization. Plays a role in neurite outgrowth and in the establishment and maturation of dendritic arbors, thereby contributing to neocortical and hippocampal circuitry function. Stabilizes GAP43 mRNA and protects it from decay during postembryonic development in the brain. By promoting the stabilization of GAP43 mRNA, plays a role in NGF-mediated neurite outgrowth. Binds to BDNF long 3'UTR mRNA, thereby leading to its stabilization and increased dendritic translation after activation of PKC. By increasing translation of BDNF after nerve injury, may contribute to nerve regeneration. Acts as a stabilizing factor by binding to the 3'UTR of NOVA1 mRNA, thereby increasing its translation and enhancing its functional activity in neuron-specific splicing. Stimulates translation of mRNA in a poly(A)- and cap-dependent manner, possibly by associating with the EIF4F cap-binding complex. May also negatively regulate translation by binding to the 5'UTR of Ins2 mRNA, thereby repressing its translation. Upon glucose stimulation, Ins2 mRNA is released from ELAVL4 and translational inhibition is abolished. Also plays a role in the regulation of alternative splicing. May regulate alternative splicing of CALCA pre-mRNA into Calcitonin and Calcitonin gene-related peptide 1 (CGRP) by competing with splicing regulator TIAR for binding to U-rich intronic sequences of CALCA pre-mRNA. In Homo sapiens (Human), this protein is ELAV-like protein 4 (ELAVL4).